A 395-amino-acid polypeptide reads, in one-letter code: Acid ceramidase (395 aa).

An N-terminal signal peptide occupies residues 1–20 (MLGWSRLTFILLSGIVTCLV). Cysteine 31 and cysteine 340 are oxidised to a cystine. Cysteine 143 serves as the catalytic Nucleophile. 4 N-linked (GlcNAc...) asparagine glycosylation sites follow: asparagine 195, asparagine 259, asparagine 286, and asparagine 342. Cysteine 388 and cysteine 392 are disulfide-bonded.

Belongs to the acid ceramidase family. In terms of assembly, heterodimer; disulfide-linked. The heterodimer is composed of the disulfide-linked alpha and beta chains produced by autocatalytic cleavage of the precursor. N-glycosylated. Post-translationally, proteolytically cleaved into two chains alpha and beta that remain associated via a disulfide bond. Cleavage gives rise to a conformation change that activates the enzyme. The same catalytic Cys residue mediates the autoproteolytic cleavage and subsequent hydrolysis of lipid substrates. The beta chain may undergo an additional C-terminal processing.

It is found in the lysosome. The protein resides in the secreted. The catalysed reaction is an N-acylsphing-4-enine + H2O = sphing-4-enine + a fatty acid. It carries out the reaction N-dodecanoylsphing-4-enine + H2O = dodecanoate + sphing-4-enine. The enzyme catalyses N-tetradecanoylsphing-4-enine + H2O = tetradecanoate + sphing-4-enine. It catalyses the reaction N-hexadecanoylsphing-4-enine + H2O = sphing-4-enine + hexadecanoate. The catalysed reaction is N-octadecanoylsphing-4-enine + H2O = sphing-4-enine + octadecanoate. It carries out the reaction N-dodecanoyl-(4R)-hydroxysphinganine + H2O = (4R)-hydroxysphinganine + dodecanoate. The enzyme catalyses N-(dodecanoyl)-sphinganine + H2O = dodecanoate + sphinganine. It catalyses the reaction N-(acetyl)-sphing-4-enine + H2O = sphing-4-enine + acetate. The catalysed reaction is N-(hexanoyl)sphing-4-enine + H2O = hexanoate + sphing-4-enine. It carries out the reaction N-octanoylsphing-4-enine + H2O = octanoate + sphing-4-enine. The enzyme catalyses N-(9Z-octadecenoyl)-sphing-4-enine + H2O = sphing-4-enine + (9Z)-octadecenoate. It catalyses the reaction N-dodecanoylethanolamine + H2O = dodecanoate + ethanolamine. The protein operates within lipid metabolism; sphingolipid metabolism. Functionally, lysosomal ceramidase that hydrolyzes sphingolipid ceramides into sphingosine and free fatty acids at acidic pH. Ceramides, sphingosine, and its phosphorylated form sphingosine-1-phosphate are bioactive lipids that mediate cellular signaling pathways regulating several biological processes including cell proliferation, apoptosis and differentiation. Has a higher catalytic efficiency towards C12-ceramides versus other ceramides. Also catalyzes the reverse reaction allowing the synthesis of ceramides from fatty acids and sphingosine. For the reverse synthetic reaction, the natural sphingosine D-erythro isomer is more efficiently utilized as a substrate compared to D-erythro-dihydrosphingosine and D-erythro-phytosphingosine, while the fatty acids with chain lengths of 12 or 14 carbons are the most efficiently used. Also has an N-acylethanolamine hydrolase activity. By regulating the levels of ceramides, sphingosine and sphingosine-1-phosphate in the epidermis, mediates the calcium-induced differentiation of epidermal keratinocytes. Also indirectly regulates tumor necrosis factor/TNF-induced apoptosis. By regulating the intracellular balance between ceramides and sphingosine, in adrenocortical cells, probably also acts as a regulator of steroidogenesis. The protein is Acid ceramidase of Bos taurus (Bovine).